A 242-amino-acid chain; its full sequence is Putative serine/threonine-protein kinase (242 aa).

The 194-residue stretch at 49 to 242 folds into the Protein kinase domain; it reads FSSKNKVGEG…KSDVYSFGVL (194 aa). Residues 55-63 and lysine 77 each bind ATP; that span reads VGEGGCGAV. The Proton acceptor role is filled by aspartate 177.

This sequence belongs to the protein kinase superfamily. Ser/Thr protein kinase family.

It catalyses the reaction L-seryl-[protein] + ATP = O-phospho-L-seryl-[protein] + ADP + H(+). The catalysed reaction is L-threonyl-[protein] + ATP = O-phospho-L-threonyl-[protein] + ADP + H(+). This is Putative serine/threonine-protein kinase from Helianthus annuus (Common sunflower).